Reading from the N-terminus, the 332-residue chain is MPSEAESSANSAPATPPPPPNFWGTMPEEEYYTSQGVRNSKSYFETPNGKLFTQSFLPLDGEIKGTVYMSHGYGSDTSWMFQKICMSFSSWGYAVFAADLLGHGRSDGIRCYMGDMEKVAATSLAFFKHVRCSDPYKDLPAFLFGESMGGLVTLLMYFQSEPETWTGLMFSAPLFVIPEDMKPSKAHLFAYGLLFGLADTWAAMPDNKMVGKAIKDPEKLKIIASNPQRYTGKPRVGTMRELLRKTQYVQENFGKVTIPVFTAHGTADGVTCPTSSKLLYEKASSADKTLKIYEGMYHSLIQGEPDENAEIVLKDMREWIDEKVKKYGSKTA.

Low complexity predominate over residues 1–13 (MPSEAESSANSAP). A disordered region spans residues 1-26 (MPSEAESSANSAPATPPPPPNFWGTM). The active-site Nucleophile is the S147. Catalysis depends on charge relay system residues D268 and H298.

It belongs to the AB hydrolase superfamily. Monoacylglycerol lipase family. As to quaternary structure, interacts with ACBP2. As to expression, expressed in vasculature of roots and leaves, stems, flowers and siliques.

It is found in the cell membrane. The enzyme catalyses 5-O-[(E)-caffeoyl]-shikimate + H2O = shikimate + (E)-caffeate + H(+). Its function is as follows. Esterase involved in the biosynthesis of lignin. Hydrolyzes caffeoylshikimate into caffeate and shikimate. Together with 4-coumarate--CoA ligase (4CL), acts on an alternative reaction for the formation of caffeoyl-CoA and bypasses the second reaction of shikimate O-hydroxycinnamoyltransferase (HST). Also accepts 4-coumaroylshikimate as substrate, but with lower activity. According to PubMed:20345607 and PubMed:22915575, possesses monoacylglycerol O-acyltransferase, monoacylglycerol lipase and lysophospholipase activities in vitro. With the association of ACBP2, may promote the degradation of lysophosphatidylcholine and detoxify the peroxidized membrane in response to cadmium-induced oxidative stress. However these results require additional confirmation in vivo. The protein is Caffeoylshikimate esterase (CSE) of Arabidopsis thaliana (Mouse-ear cress).